The chain runs to 146 residues: Large ribosomal subunit protein uL15 (146 aa).

Positions 1–18 (MKLHELKPTPGSRHERNR) are enriched in basic and acidic residues. Residues 1–69 (MKLHELKPTP…RLPKRGFNNP (69 aa)) form a disordered region. Residues 42-52 (SGGGVRPGFEG) show a composition bias toward gly residues.

It belongs to the universal ribosomal protein uL15 family. Part of the 50S ribosomal subunit.

In terms of biological role, binds to the 23S rRNA. This Exiguobacterium sp. (strain ATCC BAA-1283 / AT1b) protein is Large ribosomal subunit protein uL15.